Consider the following 237-residue polypeptide: 2-C-methyl-D-erythritol 4-phosphate cytidylyltransferase (237 aa).

The protein belongs to the IspD/TarI cytidylyltransferase family. IspD subfamily.

It catalyses the reaction 2-C-methyl-D-erythritol 4-phosphate + CTP + H(+) = 4-CDP-2-C-methyl-D-erythritol + diphosphate. Its pathway is isoprenoid biosynthesis; isopentenyl diphosphate biosynthesis via DXP pathway; isopentenyl diphosphate from 1-deoxy-D-xylulose 5-phosphate: step 2/6. Its function is as follows. Catalyzes the formation of 4-diphosphocytidyl-2-C-methyl-D-erythritol from CTP and 2-C-methyl-D-erythritol 4-phosphate (MEP). The polypeptide is 2-C-methyl-D-erythritol 4-phosphate cytidylyltransferase (Acaryochloris marina (strain MBIC 11017)).